The chain runs to 509 residues: Diacylglycerol kinase 5 (509 aa).

The 152-residue stretch at 36–187 (TPASPVLVFI…IDNWHILMRM (152 aa)) folds into the DAGKc domain. A compositionally biased stretch (basic and acidic residues) spans 439 to 452 (RSVFDPSTPRHQDG). The disordered stretch occupies residues 439–509 (RSVFDPSTPR…SNVHGWSHVL (71 aa)). Acidic residues predominate over residues 453 to 467 (AEDYDDNEDDSVAEG). The span at 468-489 (EEFRKFGAADTFKIPDEGEHSN) shows a compositional bias: basic and acidic residues. Positions 490-500 (KKGRASRRRNS) are enriched in basic residues.

It belongs to the eukaryotic diacylglycerol kinase family. In terms of assembly, monomer.

The enzyme catalyses a 1,2-diacyl-sn-glycerol + ATP = a 1,2-diacyl-sn-glycero-3-phosphate + ADP + H(+). Its function is as follows. Phosphorylates the second messenger diacylglycerol (DAG) to generate phosphatidic acid (PA), another important signaling molecule. PA is required for plant development and responses to abiotic stress and pathogen attack. May be involved in the accumulation of PA during cold stress. The sequence is that of Diacylglycerol kinase 5 (DGK5) from Arabidopsis thaliana (Mouse-ear cress).